The primary structure comprises 168 residues: 2-C-methyl-D-erythritol 2,4-cyclodiphosphate synthase (168 aa).

A divalent metal cation-binding residues include D8 and H10. 4-CDP-2-C-methyl-D-erythritol 2-phosphate-binding positions include 8–10 (DLH) and 34–35 (HS). Position 42 (H42) interacts with a divalent metal cation. 4-CDP-2-C-methyl-D-erythritol 2-phosphate-binding positions include 56–58 (DIG), 61–65 (FPDTD), 132–135 (TTTE), and R142.

The protein belongs to the IspF family. Homotrimer. A divalent metal cation serves as cofactor.

It carries out the reaction 4-CDP-2-C-methyl-D-erythritol 2-phosphate = 2-C-methyl-D-erythritol 2,4-cyclic diphosphate + CMP. Its pathway is isoprenoid biosynthesis; isopentenyl diphosphate biosynthesis via DXP pathway; isopentenyl diphosphate from 1-deoxy-D-xylulose 5-phosphate: step 4/6. Involved in the biosynthesis of isopentenyl diphosphate (IPP) and dimethylallyl diphosphate (DMAPP), two major building blocks of isoprenoid compounds. Catalyzes the conversion of 4-diphosphocytidyl-2-C-methyl-D-erythritol 2-phosphate (CDP-ME2P) to 2-C-methyl-D-erythritol 2,4-cyclodiphosphate (ME-CPP) with a corresponding release of cytidine 5-monophosphate (CMP). The chain is 2-C-methyl-D-erythritol 2,4-cyclodiphosphate synthase from Desulfosudis oleivorans (strain DSM 6200 / JCM 39069 / Hxd3) (Desulfococcus oleovorans).